Here is a 48-residue protein sequence, read N- to C-terminus: MTKRTLSNKSRYSVLKLSGFRSRMATPQGRKTIRNRRKKGRKNLTLRR.

A disordered region spans residues 18–48; that stretch reads SGFRSRMATPQGRKTIRNRRKKGRKNLTLRR. The span at 31 to 48 shows a compositional bias: basic residues; sequence KTIRNRRKKGRKNLTLRR.

This sequence belongs to the bacterial ribosomal protein bL34 family.

It is found in the plastid. Its subcellular location is the chloroplast. This is Large ribosomal subunit protein bL34c from Phaeodactylum tricornutum (strain CCAP 1055/1).